We begin with the raw amino-acid sequence, 270 residues long: tRNA pseudouridine synthase A (270 aa).

Catalysis depends on D60, which acts as the Nucleophile. An RNA binding region spans residues 107 to 111; sequence FHARF. Y118 serves as a coordination point for substrate. The segment at 168–172 is interaction with tRNA; that stretch reads QCQSR.

Belongs to the tRNA pseudouridine synthase TruA family. As to quaternary structure, homodimer.

It carries out the reaction uridine(38/39/40) in tRNA = pseudouridine(38/39/40) in tRNA. Functionally, formation of pseudouridine at positions 38, 39 and 40 in the anticodon stem and loop of transfer RNAs. The sequence is that of tRNA pseudouridine synthase A from Enterobacter sp. (strain 638).